A 231-amino-acid chain; its full sequence is Red fluorescent protein eqFP611 (231 aa).

The segment at residues 63–65 is a cross-link (2-iminomethyl-5-imidazolinone (Met-Gly)); the sequence is MYG. At Y64 the chain carries (E)-2,3-didehydrotyrosine.

Belongs to the GFP family. As to quaternary structure, monomer. Contains a chromophore consisting of modified amino acid residues. The chromophore is formed by autocatalytic backbone condensation between Xaa-N and Gly-(N+2), oxidation of Tyr-(N+1) to didehydrotyrosine, and formation of a double bond to the alpha-amino nitrogen of residue Xaa-N. Maturation of the chromophore requires nothing other than molecular oxygen.

Its function is as follows. Pigment protein. The protein is Red fluorescent protein eqFP611 of Entacmaea quadricolor (Bubble-tip anemone).